A 276-amino-acid polypeptide reads, in one-letter code: MKLTKLFGLATLVSAVALAGCKDDKPAAAAAPQEPAARKLTVGVMTGAEAQVTEVAAKIAKEKYNIDVKLVEFTEYTQPNDALTKGDLDANAFQHKPYMDKEVEQRGYKLAIVGNTFVFPIAAYSKKIKNVSELQDGATVAVPNNPSNLGRALLLLEKQGLIKLKDPSNLFSTSIDVIENPKNLQIKEVEGSLLPRMLDDVDFAIINNNYAVQQGLTAEKDGIFVEDKDSPYVNLVVSREDNKDNEAIKDFVKAFQTEEVYQEALKHFQGGVVKGW.

An N-terminal signal peptide occupies residues 1–20 (MKLTKLFGLATLVSAVALAG). Residue cysteine 21 is the site of N-palmitoyl cysteine attachment. Cysteine 21 is lipidated: S-diacylglycerol cysteine.

Belongs to the NlpA lipoprotein family.

It localises to the cell outer membrane. This protein is a component of a D-methionine permease, a binding protein-dependent, ATP-driven transport system. In Pasteurella multocida (strain Pm70), this protein is Probable D-methionine-binding lipoprotein MetQ (metQ).